We begin with the raw amino-acid sequence, 78 residues long: Exodeoxyribonuclease 7 small subunit (78 aa).

Belongs to the XseB family. Heterooligomer composed of large and small subunits.

It is found in the cytoplasm. The catalysed reaction is Exonucleolytic cleavage in either 5'- to 3'- or 3'- to 5'-direction to yield nucleoside 5'-phosphates.. Functionally, bidirectionally degrades single-stranded DNA into large acid-insoluble oligonucleotides, which are then degraded further into small acid-soluble oligonucleotides. The sequence is that of Exodeoxyribonuclease 7 small subunit from Synechococcus sp. (strain JA-2-3B'a(2-13)) (Cyanobacteria bacterium Yellowstone B-Prime).